The following is a 21-amino-acid chain: Sarafotoxin-D (21 aa).

Disulfide bonds link Cys1/Cys15 and Cys3/Cys11.

It belongs to the endothelin/sarafotoxin family. As to expression, expressed by the venom gland.

The protein localises to the secreted. Vasoconstrictor activity. These toxins cause cardiac arrest probably as a result of coronary vasospasm. May act by displaying agonistic activities towards endothelin-1 and -2 receptors (EDNRA and EDNRB). The protein is Sarafotoxin-D of Atractaspis engaddensis (Israeli burrowing asp).